A 273-amino-acid polypeptide reads, in one-letter code: FALAQMVNDLEMVDEFVGKGANGLEIDVTFSSSGQPQYTYHGVPCDCFRSCKRREDFDTYIKYIRHLTTPGDPKFRSNLIMLIFDLKLNGLSQDALRKAGVEMADKLVGNYWQDLAEARAYIVLSMPSIEQSAFVTAFKDELKDFGYDKNLDRIGYDFSGNEDLDETAKVYKQLNINGHIWQADGITNRLPRGDSRLKEAISKRDTPGYQYINKVYTWTIDKASSIANALRLGVDGVMTNYPERVIDALNDSEFSGKFRLATYEDNPWETFKG.

Glu-25 and Asp-27 together coordinate Mg(2+). His-41 functions as the Nucleophile in the catalytic mechanism. Cysteines 45 and 51 form a disulfide. Residue Asp-85 coordinates Mg(2+).

This sequence belongs to the arthropod phospholipase D family. Class I subfamily. Requires Mg(2+) as cofactor. As to expression, expressed by the venom gland.

The protein resides in the secreted. The enzyme catalyses an N-(acyl)-sphingosylphosphocholine = an N-(acyl)-sphingosyl-1,3-cyclic phosphate + choline. It carries out the reaction an N-(acyl)-sphingosylphosphoethanolamine = an N-(acyl)-sphingosyl-1,3-cyclic phosphate + ethanolamine. It catalyses the reaction a 1-acyl-sn-glycero-3-phosphocholine = a 1-acyl-sn-glycero-2,3-cyclic phosphate + choline. The catalysed reaction is a 1-acyl-sn-glycero-3-phosphoethanolamine = a 1-acyl-sn-glycero-2,3-cyclic phosphate + ethanolamine. Dermonecrotic toxins cleave the phosphodiester linkage between the phosphate and headgroup of certain phospholipids (sphingolipid and lysolipid substrates), forming an alcohol (often choline) and a cyclic phosphate. This toxin acts on sphingomyelin (SM). It may also act on ceramide phosphoethanolamine (CPE), lysophosphatidylcholine (LPC) and lysophosphatidylethanolamine (LPE), but not on lysophosphatidylserine (LPS), and lysophosphatidylglycerol (LPG). It acts by transphosphatidylation, releasing exclusively cyclic phosphate products as second products. Induces dermonecrosis, hemolysis, increased vascular permeability, edema, inflammatory response, and platelet aggregation. This Loxosceles spinulosa (Recluse spider) protein is Dermonecrotic toxin LspiSicTox-betaIE1i.